The primary structure comprises 392 residues: Probable glucan endo-1,6-beta-glucosidase B (392 aa).

Residues 1–18 form the signal peptide; the sequence is MKVTRLAVLNTLATLTVA. A glycan (N-linked (GlcNAc...) asparagine) is linked at Asn31. Catalysis depends on Glu220, which acts as the Proton donor. Glu322 serves as the catalytic Nucleophile.

It belongs to the glycosyl hydrolase 5 (cellulase A) family.

The protein localises to the secreted. It catalyses the reaction Random hydrolysis of (1-&gt;6)-linkages in (1-&gt;6)-beta-D-glucans.. Its function is as follows. Beta-glucanases participate in the metabolism of beta-glucan, the main structural component of the cell wall. Acts on lutean, pustulan and 1,6-oligo-beta-D-glucosides. This Aspergillus flavus (strain ATCC 200026 / FGSC A1120 / IAM 13836 / NRRL 3357 / JCM 12722 / SRRC 167) protein is Probable glucan endo-1,6-beta-glucosidase B (exgB).